A 1662-amino-acid polypeptide reads, in one-letter code: ABC transporter A family member 5 (1662 aa).

Transmembrane regions (helical) follow at residues 30 to 50, 242 to 262, 284 to 304, 317 to 337, 346 to 366, 377 to 397, and 417 to 437; these read IVFP…VQLF, SVFV…ELVV, ISWI…IIVI, IIVI…AFIF, FAGL…IFIG, LLLC…IMSI, and QIIG…WYLD. The 235-residue stretch at 505-739 folds into the ABC transporter 1 domain; that stretch reads ISIRNLRKEF…YGVGYLLTCS (235 aa). ATP is bound at residue 541 to 548; the sequence is GPNGSGKS. 7 consecutive transmembrane segments (helical) span residues 872–892, 1052–1072, 1102–1122, 1130–1150, 1163–1183, 1201–1221, and 1246–1266; these read FKAF…SIIV, IVYF…SFAG, LWDY…LAIV, FGLF…LSYL, GAIT…MIIL, IIDI…VIFI, and STPI…ILLI. Residues 1322–1557 form the ABC transporter 2 domain; the sequence is LQYKGLHKLF…FGAGYSVEVK (236 aa). Residue 1360–1367 participates in ATP binding; that stretch reads GLNGAGKT.

This sequence belongs to the ABC transporter superfamily. ABCA family.

It localises to the membrane. The sequence is that of ABC transporter A family member 5 (abcA5) from Dictyostelium discoideum (Social amoeba).